A 111-amino-acid chain; its full sequence is Propane 2-monooxygenase, effector component (111 aa).

This sequence belongs to the TmoD/XamoD family. As to quaternary structure, the propane 2-monooxygenase multicomponent enzyme system is composed of an electron transfer component and a monooxygenase component interacting with the effector protein PrmD. The electron transfer component is composed of a reductase (PrmB), and the monooxygenase component is formed by a large subunit (PrmA) and a small subunit (PrmC).

Its function is as follows. Effector component of the propane 2-monooxygenase multicomponent enzyme system which is involved in the degradation of propane via the O2-dependent hydroxylation of propane. This Gordonia sp. (strain TY-5) protein is Propane 2-monooxygenase, effector component.